The following is a 151-amino-acid chain: MHALQAKILDPRLGSEFPLPAYATPGSAGLDLRALLKEDTLLEPGQTILIPTGLSIYIGDPGLAAVILPRSGLGHKHGIVLGNLVGLIDSDYQGELMVSCWNRGNTPFTIAVGERIAQLVLVPVVQAHFDIVEAFDESQRGAGGFGHSGSH.

Substrate is bound by residues 70 to 72 (RSG), asparagine 83, 87 to 89 (LID), and methionine 97.

It belongs to the dUTPase family. Mg(2+) serves as cofactor.

The enzyme catalyses dUTP + H2O = dUMP + diphosphate + H(+). It participates in pyrimidine metabolism; dUMP biosynthesis; dUMP from dCTP (dUTP route): step 2/2. Its function is as follows. This enzyme is involved in nucleotide metabolism: it produces dUMP, the immediate precursor of thymidine nucleotides and it decreases the intracellular concentration of dUTP so that uracil cannot be incorporated into DNA. This Pseudomonas putida (strain ATCC 700007 / DSM 6899 / JCM 31910 / BCRC 17059 / LMG 24140 / F1) protein is Deoxyuridine 5'-triphosphate nucleotidohydrolase.